The sequence spans 439 residues: Divalent metal cation transporter MntH (439 aa).

11 helical membrane passes run G32 to D52, G67 to L87, I121 to L141, M144 to E164, L173 to T193, A214 to H234, V261 to G281, A301 to I321, A350 to L370, V371 to F391, and F406 to I426.

Belongs to the NRAMP family.

Its subcellular location is the cell inner membrane. Its function is as follows. H(+)-stimulated, divalent metal cation uptake system. This is Divalent metal cation transporter MntH from Verminephrobacter eiseniae (strain EF01-2).